The following is a 529-amino-acid chain: Probable cytochrome P450 6t1 (529 aa).

Residue C472 participates in heme binding.

The protein belongs to the cytochrome P450 family. It depends on heme as a cofactor.

It is found in the endoplasmic reticulum membrane. The protein localises to the microsome membrane. Functionally, may be involved in the metabolism of insect hormones and in the breakdown of synthetic insecticides. The protein is Probable cytochrome P450 6t1 (Cyp6t1) of Drosophila melanogaster (Fruit fly).